Reading from the N-terminus, the 473-residue chain is B box and SPRY domain-containing protein (473 aa).

The segment at Met-1 to Leu-69 is disordered. The span at Lys-35 to Gly-51 shows a compositional bias: pro residues. Residues Glu-65–Glu-113 form a B box-type zinc finger. The 197-residue stretch at Ser-259–Thr-455 folds into the B30.2/SPRY domain.

As to quaternary structure, interacts with YWHAZ/14-3-3 protein zeta. Interacts with TRPV5 and TRPV6. In terms of tissue distribution, according to PubMed:10978534, testis-specific. According to PubMed:16371431, broadly expressed.

It localises to the cytoplasm. It is found in the membrane. Functionally, may regulate epithelial calcium transport by inhibiting TRPV5 activity. In Mus musculus (Mouse), this protein is B box and SPRY domain-containing protein (Bspry).